Consider the following 244-residue polypeptide: MSDWMPIAKEYDPLKAGSIDGTDEDPHDRAVWRAMLARYVPNKGVTGDPLLTLFVARLNSQTKEEKLKEVFSRYGDIRRLRLVRDLVTGFSKGYAFIEYKEERALLKAYRDADGLVIDQHEIFVDYELERTLRGWIPRRLGGGLGGKKESGQLRFGGRDRPFRKPINLPVVKNEPHREGKRERRERSRSRDRHWDPRPRERDHDRGREKHWQDRARVWPENDWEREREFRDERAKTRDKRDRSK.

The 79-residue stretch at 51-129 (LTLFVARLNS…HEIFVDYELE (79 aa)) folds into the RRM domain. The segment covering 146-162 (GKKESGQLRFGGRDRPF) has biased composition (basic and acidic residues). The segment at 146 to 244 (GKKESGQLRF…KTRDKRDRSK (99 aa)) is disordered. A Glycyl lysine isopeptide (Lys-Gly) (interchain with G-Cter in SUMO2) cross-link involves residue K172. 2 stretches are compositionally biased toward basic and acidic residues: residues 173-185 (NEPH…ERRE) and 192-244 (RHWD…DRSK).

Component of the U11/U12 snRNPs that are part of the U12-type spliceosome.

Its subcellular location is the nucleus. This Rattus norvegicus (Rat) protein is U11/U12 small nuclear ribonucleoprotein 35 kDa protein (Snrnp35).